The sequence spans 92 residues: Progonadoliberin-1 (92 aa).

Positions 1 to 23 (MKPIQKLLAGLILLTWCVEGCSS) are cleaved as a signal peptide. Residue Q24 is modified to Pyrrolidone carboxylic acid. At G33 the chain carries Glycine amide.

It belongs to the GnRH family. In terms of processing, the precursor is cleaved by ACE, which removes the Gly-Lys-Arg peptide at the C-terminus, leading to mature hormone. The mature form of Gonadoliberin-1 is also cleaved and degraded by ACE.

It localises to the secreted. Functionally, stimulates the secretion of gonadotropins; it stimulates the secretion of both luteinizing and follicle-stimulating hormones. The sequence is that of Progonadoliberin-1 (GNRH1) from Homo sapiens (Human).